We begin with the raw amino-acid sequence, 327 residues long: Pyruvate dehydrogenase E1 component subunit beta (327 aa).

Glu-60 contacts thiamine diphosphate. The K(+) site is built by Val-113, Ala-161, Ile-162, and Glu-164.

Heterodimer of an alpha and a beta chain. Thiamine diphosphate is required as a cofactor.

It localises to the plastid. It is found in the chloroplast. It carries out the reaction N(6)-[(R)-lipoyl]-L-lysyl-[protein] + pyruvate + H(+) = N(6)-[(R)-S(8)-acetyldihydrolipoyl]-L-lysyl-[protein] + CO2. Its function is as follows. The pyruvate dehydrogenase complex catalyzes the overall conversion of pyruvate to acetyl-CoA and CO(2). It contains multiple copies of three enzymatic components: pyruvate dehydrogenase (E1), dihydrolipoamide acetyltransferase (E2) and lipoamide dehydrogenase (E3). This Cyanidium caldarium (Red alga) protein is Pyruvate dehydrogenase E1 component subunit beta (pdhB).